The following is a 338-amino-acid chain: DNA-directed RNA polymerase subunit alpha (338 aa).

Residues 1–230 (MRKITTSAYM…QQMSVFKGIL (230 aa)) form an alpha N-terminal domain (alpha-NTD) region. The alpha C-terminal domain (alpha-CTD) stretch occupies residues 247 to 338 (FSKLLSSVED…ELKSQMSAKE (92 aa)).

Belongs to the RNA polymerase alpha chain family. Homodimer. The RNAP catalytic core consists of 2 alpha, 1 beta, 1 beta' and 1 omega subunit. When a sigma factor is associated with the core the holoenzyme is formed, which can initiate transcription.

The enzyme catalyses RNA(n) + a ribonucleoside 5'-triphosphate = RNA(n+1) + diphosphate. Functionally, DNA-dependent RNA polymerase catalyzes the transcription of DNA into RNA using the four ribonucleoside triphosphates as substrates. The chain is DNA-directed RNA polymerase subunit alpha from Campylobacter concisus (strain 13826).